Consider the following 395-residue polypeptide: Protein hedgehog (395 aa).

The N-terminal stretch at 1 to 26 (MDNHSSVPWASAASVTCLSLDAKCHS) is a signal peptide. Over residues 26 to 43 (SSSSSCSSKSTASSISAS) the composition is skewed to low complexity. Residues 26-46 (SSSSSCSSKSTASSISASPET) are disordered. Positions 27 to 82 (SSSSCSSKSTASSISASPETQTMRHIAHTQRCLSRLTSLVALLLIVLPMMFSPAHS) are excised as a propeptide. The N-palmitoyl cysteine moiety is linked to residue Cys83. Ca(2+)-binding residues include Glu147, Glu148, Asp153, Thr183, Glu184, Asp187, and Asp189. Gly255 is lipidated: Cholesterol glycine ester.

The protein belongs to the hedgehog family. Interacts with shf. The C-terminal part of the hedgehog protein precursor displays an autoproteolysis activity that results in the cleavage of the full-length protein into two parts (N-product and C-product). In addition, the C-terminal part displays a cholesterol transferase activity that results by the covalent attachment of a cholesterol moiety to the C-terminal of the newly generated N-product. The N-product is the active species in both local and long-range signaling, whereas the C-product has no signaling activity. In terms of processing, cholesterylation is required for N-product targeting to lipid rafts and multimerization. Post-translationally, N-palmitoylation by Rasp of the hedgehog N-product, within the secretory pathway, is required for the embryonic and larval patterning activities of the hedgehog signal.

It localises to the nucleus. Its subcellular location is the cytoplasm. The protein localises to the cell membrane. It catalyses the reaction glycyl-L-cysteinyl-[protein] + cholesterol + H(+) = [protein]-C-terminal glycyl cholesterol ester + N-terminal L-cysteinyl-[protein]. The C-terminal part of the hedgehog protein precursor displays an autoproteolysis activity that results in the cleavage of the full-length protein into two parts (N-product and C-product). In addition, the C-terminal part displays a cholesterol transferase activity that results by the covalent attachment of a cholesterol moiety to the C-terminal of the newly generated N-product. Once cleaved, the C-product has no signaling activity and diffuses from the cell. Its function is as follows. The dually lipidated hedgehog protein N-product is a morphogen which is essential for a variety of patterning events during development. Establishes the anterior-posterior axis of the embryonic segments and patterns the larval imaginal disks. Binds to the patched (ptc) receptor, which functions in association with smoothened (smo), to activate the transcription of target genes wingless (wg), decapentaplegic (dpp) and ptc. In the absence of hh, ptc represses the constitutive signaling activity of smo through fused (fu). Essential component of a signaling pathway which regulates the Duox-dependent gut immune response to bacterial uracil; required to activate Cad99C-dependent endosome formation, norpA-dependent Ca2+ mobilization and p38 MAPK, which are essential steps in the Duox-dependent production of reactive oxygen species (ROS) in response to intestinal bacterial infection. During photoreceptor differentiation, it up-regulates transcription of Ubr3, which in turn promotes the hh-signaling pathway by mediating the ubiquitination and degradation of cos. This is Protein hedgehog from Drosophila simulans (Fruit fly).